The sequence spans 201 residues: FMN-dependent NADH:quinone oxidoreductase (201 aa).

FMN contacts are provided by residues Ser9 and 16 to 18 (SYS).

The protein belongs to the azoreductase type 1 family. Homodimer. It depends on FMN as a cofactor.

The catalysed reaction is 2 a quinone + NADH + H(+) = 2 a 1,4-benzosemiquinone + NAD(+). The enzyme catalyses N,N-dimethyl-1,4-phenylenediamine + anthranilate + 2 NAD(+) = 2-(4-dimethylaminophenyl)diazenylbenzoate + 2 NADH + 2 H(+). Functionally, quinone reductase that provides resistance to thiol-specific stress caused by electrophilic quinones. Also exhibits azoreductase activity. Catalyzes the reductive cleavage of the azo bond in aromatic azo compounds to the corresponding amines. The chain is FMN-dependent NADH:quinone oxidoreductase from Mesomycoplasma hyopneumoniae (strain J / ATCC 25934 / NCTC 10110) (Mycoplasma hyopneumoniae).